The following is a 232-amino-acid chain: Adenosylcobinamide-GDP ribazoletransferase (232 aa).

Transmembrane regions (helical) follow at residues 32–52 (PIYFPLVGYIPGILFFFGGSF), 54–74 (NFLLKILFLILGYYFFDLFHF), 102–122 (VGPFAVFFGTLYVVVFWTLYL), 126–146 (PITFIYSSVFGRYSMNLLMFF), 172–192 (FFLLPLLFSMKYFFISYVVTV), and 212–232 (DVLGGACLMTNGLLLVVLGVV).

This sequence belongs to the CobS family. It depends on Mg(2+) as a cofactor.

The protein localises to the cell inner membrane. It catalyses the reaction alpha-ribazole + adenosylcob(III)inamide-GDP = adenosylcob(III)alamin + GMP + H(+). It carries out the reaction alpha-ribazole 5'-phosphate + adenosylcob(III)inamide-GDP = adenosylcob(III)alamin 5'-phosphate + GMP + H(+). It participates in cofactor biosynthesis; adenosylcobalamin biosynthesis; adenosylcobalamin from cob(II)yrinate a,c-diamide: step 7/7. In terms of biological role, joins adenosylcobinamide-GDP and alpha-ribazole to generate adenosylcobalamin (Ado-cobalamin). Also synthesizes adenosylcobalamin 5'-phosphate from adenosylcobinamide-GDP and alpha-ribazole 5'-phosphate. This chain is Adenosylcobinamide-GDP ribazoletransferase, found in Thermosipho melanesiensis (strain DSM 12029 / CIP 104789 / BI429).